Reading from the N-terminus, the 474-residue chain is tRNA-2-methylthio-N(6)-dimethylallyladenosine synthase (474 aa).

The region spanning 3-120 (KKLHIKTWGC…LPEMIEQIQR (118 aa)) is the MTTase N-terminal domain. Residues Cys-12, Cys-49, Cys-83, Cys-157, Cys-161, and Cys-164 each contribute to the [4Fe-4S] cluster site. In terms of domain architecture, Radical SAM core spans 143–375 (RADGPTAFVS…QDRITQQAMR (233 aa)). In terms of domain architecture, TRAM spans 378 to 441 (RQMLGTVQRI…TNSLRGEFVR (64 aa)).

It belongs to the methylthiotransferase family. MiaB subfamily. As to quaternary structure, monomer. The cofactor is [4Fe-4S] cluster.

Its subcellular location is the cytoplasm. It catalyses the reaction N(6)-dimethylallyladenosine(37) in tRNA + (sulfur carrier)-SH + AH2 + 2 S-adenosyl-L-methionine = 2-methylsulfanyl-N(6)-dimethylallyladenosine(37) in tRNA + (sulfur carrier)-H + 5'-deoxyadenosine + L-methionine + A + S-adenosyl-L-homocysteine + 2 H(+). Its function is as follows. Catalyzes the methylthiolation of N6-(dimethylallyl)adenosine (i(6)A), leading to the formation of 2-methylthio-N6-(dimethylallyl)adenosine (ms(2)i(6)A) at position 37 in tRNAs that read codons beginning with uridine. The polypeptide is tRNA-2-methylthio-N(6)-dimethylallyladenosine synthase (Shewanella frigidimarina (strain NCIMB 400)).